Here is a 585-residue protein sequence, read N- to C-terminus: Urease subunit alpha (585 aa).

In terms of domain architecture, Urease spans 132-585; sequence GGIDTHIHFI…LPMAQRYFLF (454 aa). Ni(2+) contacts are provided by H137, H139, and K220. The residue at position 220 (K220) is an N6-carboxylysine. H222 is a binding site for substrate. Ni(2+) contacts are provided by H249 and H275. H323 (proton donor) is an active-site residue. D363 is a binding site for Ni(2+).

This sequence belongs to the metallo-dependent hydrolases superfamily. Urease alpha subunit family. Heterotrimer of UreA (gamma), UreB (beta) and UreC (alpha) subunits. Three heterotrimers associate to form the active enzyme. Ni cation is required as a cofactor. In terms of processing, carboxylation allows a single lysine to coordinate two nickel ions.

Its subcellular location is the cytoplasm. It carries out the reaction urea + 2 H2O + H(+) = hydrogencarbonate + 2 NH4(+). The protein operates within nitrogen metabolism; urea degradation; CO(2) and NH(3) from urea (urease route): step 1/1. This chain is Urease subunit alpha, found in Pseudarthrobacter chlorophenolicus (strain ATCC 700700 / DSM 12829 / CIP 107037 / JCM 12360 / KCTC 9906 / NCIMB 13794 / A6) (Arthrobacter chlorophenolicus).